A 479-amino-acid chain; its full sequence is Mannose-1-phosphate guanylyltransferase RfbM (479 aa).

The protein belongs to the mannose-6-phosphate isomerase type 2 family. In terms of assembly, homodimer.

It carries out the reaction alpha-D-mannose 1-phosphate + GTP + H(+) = GDP-alpha-D-mannose + diphosphate. It participates in nucleotide-sugar biosynthesis; GDP-alpha-D-mannose biosynthesis; GDP-alpha-D-mannose from alpha-D-mannose 1-phosphate (GTP route): step 1/1. The protein operates within bacterial outer membrane biogenesis; LPS O-antigen biosynthesis. Functionally, involved in GDP-mannose biosynthesis which serves as the activated sugar nucleotide precursor for mannose residues in cell surface polysaccharides. This enzyme participates in synthesis of the LPS group B O antigen. The chain is Mannose-1-phosphate guanylyltransferase RfbM (rfbM) from Salmonella typhimurium (strain LT2 / SGSC1412 / ATCC 700720).